The following is a 1452-amino-acid chain: Receptor-type tyrosine-protein phosphatase mu (1452 aa).

The signal sequence occupies residues 1-20 (MRGLGTCLATLAGLLLTAAG). The Extracellular portion of the chain corresponds to 21-742 (ETFSGGCLFD…PEKQTDHTVK (722 aa)). The region spanning 22–184 (TFSGGCLFDE…VKVLGHPCTR (163 aa)) is the MAM domain. The cysteines at positions 27 and 36 are disulfide-linked. Residues Asn72, Asn92, Asn131, and Asn249 are each glycosylated (N-linked (GlcNAc...) asparagine). 2 cysteine pairs are disulfide-bonded: Cys96–Cys182 and Cys206–Cys260. Residues 186 to 277 (PHFLRIQNVE…VGISNYAELV (92 aa)) form the Ig-like C2-type domain. 4 Fibronectin type-III domains span residues 284 to 379 (PIAP…CADP), 382 to 480 (GPRK…TDED), 482 to 587 (PGAV…SAPS), and 589 to 671 (PAYE…DSLQ). N-linked (GlcNAc...) asparagine glycosylation is found at Asn406, Asn414, Asn454, Asn534, Asn544, Asn598, Asn651, and Asn681. The chain crosses the membrane as a helical span at residues 743–764 (IAGVIAGILLFVIIFLGVVLVM). Over 765 to 1452 (KKRKLAKKRK…EVALEYLNSG (688 aa)) the chain is Cytoplasmic. Ser821 carries the post-translational modification Phosphoserine. 2 Tyrosine-protein phosphatase domains span residues 900-1154 (FKEE…ILEA) and 1186-1448 (IKEE…ALEY). Substrate-binding positions include Asp1063, 1095–1101 (CSAGAGR), and Gln1139. The Phosphocysteine intermediate role is filled by Cys1095. Cys1389 serves as the catalytic Phosphocysteine intermediate.

The protein belongs to the protein-tyrosine phosphatase family. Receptor class 2B subfamily. As to quaternary structure, homodimer.

The protein resides in the cell membrane. The catalysed reaction is O-phospho-L-tyrosyl-[protein] + H2O = L-tyrosyl-[protein] + phosphate. Its function is as follows. Receptor protein-tyrosine phosphatase that mediates homotypic cell-cell interactions and plays a role in adipogenic differentiation via modulation of p120 catenin/CTNND1 phosphorylation. Promotes CTNND1 dephosphorylation and prevents its cytoplasmic localization where it inhibits SLC2A4 membrane trafficking. In turn, SLC2A4 is directed to the plasma membrane and performs its glucose transporter function. This Homo sapiens (Human) protein is Receptor-type tyrosine-protein phosphatase mu (PTPRM).